Reading from the N-terminus, the 98-residue chain is NADH-ubiquinone oxidoreductase chain 4L (98 aa).

A run of 3 helical transmembrane segments spans residues 1 to 21 (MSMV…GLLV), 29 to 49 (SLLC…ITIL), and 61 to 81 (IILL…LVMV).

This sequence belongs to the complex I subunit 4L family. Core subunit of respiratory chain NADH dehydrogenase (Complex I) which is composed of 45 different subunits.

Its subcellular location is the mitochondrion inner membrane. The catalysed reaction is a ubiquinone + NADH + 5 H(+)(in) = a ubiquinol + NAD(+) + 4 H(+)(out). Its function is as follows. Core subunit of the mitochondrial membrane respiratory chain NADH dehydrogenase (Complex I) which catalyzes electron transfer from NADH through the respiratory chain, using ubiquinone as an electron acceptor. Part of the enzyme membrane arm which is embedded in the lipid bilayer and involved in proton translocation. This Mephitis mephitis (Striped skunk) protein is NADH-ubiquinone oxidoreductase chain 4L (MT-ND4L).